A 944-amino-acid chain; its full sequence is snRNA-activating protein complex subunit 4 homolog (944 aa).

Positions 1 to 22 (MSDLVMFEPGASTSTDVPTNTD) are disordered. The segment covering 11–22 (ASTSTDVPTNTD) has biased composition (polar residues). Residues 177 to 244 (TSNFDRRQWT…AVKSKWYNEL (68 aa)) form the Myb-like 1 domain. Positions 245–301 (NPKWNKEHWSNEEVEKLKYLRESPKFVSWPMLALNLGTNRTSYQCMEKYKTEVSQHS) constitute an HTH myb-type 1 domain. The H-T-H motif DNA-binding region spans 273-297 (WPMLALNLGTNRTSYQCMEKYKTEV). The 47-residue stretch at 304-350 (WSQDEDTKLIALTKITSINGHIQWDKVAQCMPGRTRQQVRTRFSHTL) folds into the Myb-like 2 domain. HTH myb-type domains are found at residues 351 to 406 (DASV…NRSA) and 407 to 459 (HVNE…AAKL). 2 consecutive DNA-binding regions (H-T-H motif) follow at residues 379-402 (WAKV…TNVL) and 432-455 (WAKC…LQLI). Over residues 911–921 (ARPARPPRSSA) the composition is skewed to low complexity. Residues 911–935 (ARPARPPRSSAGTPTPSHVSIDTES) are disordered. The segment covering 922 to 935 (GTPTPSHVSIDTES) has biased composition (polar residues).

Broadly expressed in all tissues, including head, vulva and tail.

The protein localises to the nucleus. In terms of biological role, binds to the promoter regions of RNA polymerase II and III small-nuclear RNA genes, type 3 RNA polymerase III non-coding RNA genes, small nucleolar RNAs and transfer RNA genes. Required for expression of mature 21U-RNAs. This is snRNA-activating protein complex subunit 4 homolog from Caenorhabditis elegans.